Reading from the N-terminus, the 337-residue chain is Trace amine-associated receptor 5 (337 aa).

Topologically, residues 1–34 (MRAVFIQGAEEHPAAFCYQVNGSCPRTVHTLGIQ) are extracellular. Asparagine 21 carries an N-linked (GlcNAc...) asparagine glycan. 2 cysteine pairs are disulfide-bonded: cysteine 24-cysteine 188 and cysteine 99-cysteine 192. A helical membrane pass occupies residues 35–55 (LVIYLACAAGMLIIVLGNLFV). The Cytoplasmic portion of the chain corresponds to 56–70 (AFAVSYFKALHTPTN). Residues 71-91 (FLLLSLALADMFLGLLVLPLS) form a helical membrane-spanning segment. Residues 92 to 109 (TIRSVESCWFFGDFLCRL) are Extracellular-facing. A helical transmembrane segment spans residues 110–130 (HTYLDPLFCLTSIFHLCFISI). Residues 131 to 154 (DRHCAICDPLLYPSKFTVRVALRY) lie on the Cytoplasmic side of the membrane. A helical transmembrane segment spans residues 155–175 (ILAGWGVPAAYTSLFLYTDVV). The interval 176–189 (ETRLSQWLEEMPCV) is extracellular Loop 2 (ECL2). The Extracellular segment spans residues 176–204 (ETRLSQWLEEMPCVGSCQLLLNKFWGWLN). A helical transmembrane segment spans residues 205–225 (FPLFFVPCLIMISLYVKIFVV). Topologically, residues 226 to 253 (ATRQAQQITTLSKNLAGAAKHDRKAAKT) are cytoplasmic. A helical transmembrane segment spans residues 254 to 274 (LGIAVGIYLLCWLPFTIDTMV). Over 275–284 (DSLLHFITPP) the chain is Extracellular. A helical transmembrane segment spans residues 285 to 307 (LVFDIFIWFAYFNSACNPIIYVF). Residues 308–337 (SYQWFRKALKLTLSQKVFSPQTRTVDLYQE) are Cytoplasmic-facing.

The protein belongs to the G-protein coupled receptor 1 family.

It is found in the cell membrane. Its function is as follows. Olfactory receptor specific for trimethylamine, a trace amine. Trimethylamine is a bacterial metabolite found in some animal odors. Trimethylamine-binding causes a conformation change that triggers signaling via G(s)-class of G alpha proteins (GNAL or GNAS). The chain is Trace amine-associated receptor 5 (TAAR5) from Pan troglodytes (Chimpanzee).